A 202-amino-acid polypeptide reads, in one-letter code: Virulence protein F (202 aa).

A compositionally biased stretch (polar residues) spans 1 to 15 (MRNSSLRDASGSNDA). Residues 1-21 (MRNSSLRDASGSNDAQVPHKT) are disordered. The 23-residue stretch at 20–42 (KTELLNLPDHVLTEVAKRLATNN) folds into the F-box domain.

As to quaternary structure, component of SCF(virF) E3 ubiquitin ligase complexes. Interacts with host VIP1 and SKP1A. Interacts with Arabidopsis thaliana ENAP1/VFP3 and VFP5 in the host cell nucleus.

The protein resides in the host nucleus. Its function is as follows. In the host plant, component of SCF(virF) E3 ubiquitin ligase complexes, which mediate the ubiquitination and subsequent proteasomal degradation of target proteins such as the host VIP1, after its implication in T-DNA translocation to the host nucleus. Required for the formation of tumors of a wild-type size on certain plant species only. The polypeptide is Virulence protein F (Agrobacterium tumefaciens (strain 15955)).